Consider the following 870-residue polypeptide: Dynamin-2 (870 aa).

Residues 28–294 (HLDLPQIAVV…LTNHIRESLP (267 aa)) form the Dynamin-type G domain. The segment at 38 to 45 (GGQSAGKS) is G1 motif. GDP-binding residues include Ser-41, Gly-43, Lys-44, Ser-45, Ser-46, Arg-59, and Gly-60. The tract at residues 64–66 (VTR) is G2 motif. The interval 136–139 (DLPG) is G3 motif. Residues 205 to 208 (TKLD) form a G4 motif region. Positions 206, 208, and 211 each coordinate GDP. A Phosphotyrosine; by SRC modification is found at Tyr-231. Residues 235–238 (VNRS) form a G5 motif region. GDP-binding residues include Asn-236, Arg-237, and Gln-239. The residue at position 299 (Lys-299) is an N6-acetyllysine. One can recognise a PH domain in the interval 519-625 (LVIRRGWLTI…WKASFLRAGV (107 aa)). Tyr-597 carries the post-translational modification Phosphotyrosine; by SRC. Lys-598 is subject to N6-acetyllysine. The GED domain maps to 653 to 744 (VETIRNLVDS…IIGDISTSTV (92 aa)). The interval 741–870 (TSTVSTPVPP…IRPAEPSLLD (130 aa)) is disordered. At Thr-755 the chain carries Phosphothreonine. Residues 756 to 767 (WLQSASSHSPTP) are compositionally biased toward polar residues. Residue Ser-764 is modified to Phosphoserine; by CDK1. A compositionally biased stretch (low complexity) spans 796–806 (VPVGAAASFSA). A compositionally biased stretch (pro residues) spans 826 to 855 (PAPPQIPSRPVRIPPGIPPGVPSRRPPAAP). Ser-848 carries the phosphoserine; by GSK3-alpha modification.

It belongs to the TRAFAC class dynamin-like GTPase superfamily. Dynamin/Fzo/YdjA family. Oligomerizes into a helical polymer that self-assembles around the vesicle membrane, when associated to the menbrane through lipid binding. Interacts with SHANK1 and SHANK2. Interacts with SNX9. Interacts (via C-terminal proline-rich domain (PRD)) with SNX18 (via SH3 domain); this interaction regulates ATG9A and ATG16L1 trafficking from recycling endosomes to sites of autophagosome formation. Interacts with SNX33 (via SH3 domain). Interacts with MYO1E (via SH3 domain). Interacts with PSTPIP1 (via SH3 domain). Interacts with CTNND2. Interacts (via C-terminal proline-rich domain (PRD)) with BIN1 (via SH3 domain); this interaction allows the recruitment of DNM2 to the membrane tubules and inhibits self-assembly-stimulated GTPase activity on the membrane. Interacts with GABARAP, GABARAPL1 and GABARAPL2. Interacts with MAP1LC3B (the lipidate and non-lipidated LC3 form); this interaction mediates recycling endosome scission leading to autophagosome release. Interacts with ITSN1. Interacts (via C-terminal proline-rich domain (PRD)) with SH3BP4 (via SH3 domain); this interaction controls the GTPase activity and is prevented by EGFR-induced tyrosine phosphorylation of either DNM2 or SH3BP4. May interact with PIK3C3. May be a component of a complex composed of RAB5A (in GDP-bound form), DYN2 and PIK3C3. Interacts with SDC4; this interaction is markedly enhanced at focal ahesion site upon induction of focal adhesions and stress-fiber formation. Interacts with ACTN1. Interacts with CTTN; this interaction stimulates the intrinsic GTPase activity of DNM2 and stabilizes the association of DNM2 and actin filaments; in addition this interaction is stimulated by ligand binding to the receptor, leading to the recruitment of the DNM2-CTTN complex to the sequestered receptor-ligand complex to its internalization. Interacts with NOSTRIN (via SH3 domain); this interaction allows the recruitment of NOS3 to dynamin-positive structures. Interacts with TUBG1; this interaction may participate in centrosome cohesion. In terms of processing, phosphorylation at Ser-848 by GSK3-alpha relieves the inhibition of BIN1 and promotes endocytosis. Phosphorylation at Ser-764 by CDK1 is greatly increased upon mitotic entry. It regulates cytokinesis downstream of calcineurin, and does not affect clathrin-mediated endocytosis. Dephosphorylated by calcineurin/PP2 during cytokinesis in a Ca(2+)- and calmodulin-dependent manner. Phosphorylated on tyrosine residues by EGFR and after activation of SRC. As to expression, widely expressed. Expressed in skeletal muscle and the peripheral nerve.

Its subcellular location is the cytoplasm. The protein localises to the cytoskeleton. It localises to the cytoplasmic vesicle. It is found in the clathrin-coated vesicle. The protein resides in the cell projection. Its subcellular location is the uropodium. The protein localises to the endosome. It localises to the microtubule organizing center. It is found in the centrosome. The protein resides in the centriole. Its subcellular location is the recycling endosome. The protein localises to the phagocytic cup. It localises to the phagosome membrane. It is found in the podosome. The protein resides in the cell junction. Its subcellular location is the postsynaptic density. The protein localises to the synapse. It localises to the synaptosome. It is found in the midbody. The protein resides in the membrane. Its subcellular location is the clathrin-coated pit. The enzyme catalyses GTP + H2O = GDP + phosphate + H(+). Catalyzes the hydrolysis of GTP and utilizes this energy to mediate vesicle scission at plasma membrane during endocytosis and filament remodeling at many actin structures during organization of the actin cytoskeleton. Plays an important role in vesicular trafficking processes, namely clathrin-mediated endocytosis (CME), exocytic and clathrin-coated vesicle from the trans-Golgi network, and PDGF stimulated macropinocytosis. During vesicular trafficking process, associates to the membrane, through lipid binding, and self-assembles into ring-like structure through oligomerization to form a helical polymer around the vesicle membrane and leading to vesicle scission. Plays a role in organization of the actin cytoskeleton by mediating arrangement of stress fibers and actin bundles in podocytes. During organization of the actin cytoskeleton, self-assembles into ring-like structure that directly bundles actin filaments to form typical membrane tubules decorated with dynamin spiral polymers. Self-assembly increases GTPase activity and the GTP hydrolysis causes the rapid depolymerization of dynamin spiral polymers, and results in dispersion of actin bundles. Remodels, through its interaction with CTTN, bundled actin filaments in a GTPase-dependent manner and plays a role in orchestrating the global actomyosin cytoskeleton. The interaction with CTTN stabilizes the interaction of DNM2 and actin filaments and stimulates the intrinsic GTPase activity that results in actin filament-barbed ends and increases the sensitivity of filaments in bundles to the actin depolymerizing factor, CFL1. Plays a role in the autophagy process, by participating in the formation of ATG9A vesicles destined for the autophagosomes through its interaction with SNX18, by mediating recycling endosome scission leading to autophagosome release through MAP1LC3B interaction. Also regulates maturation of apoptotic cell corpse-containing phagosomes by recruiting PIK3C3 to the phagosome membrane. Also plays a role in cytokinesis. May participate in centrosome cohesion through its interaction with TUBG1. Plays a role in the regulation of neuron morphology, axon growth and formation of neuronal growth cones. Involved in membrane tubulation. The chain is Dynamin-2 from Homo sapiens (Human).